The following is a 150-amino-acid chain: C-C motif chemokine 25 (150 aa).

An N-terminal signal peptide occupies residues 1-23 (MNLWLLACLVAGFLGAWAPAVHT). 2 disulfides stabilise this stretch: cysteine 30/cysteine 58 and cysteine 31/cysteine 75.

The protein belongs to the intercrine beta (chemokine CC) family. As to expression, specifically expressed by thymic dendritic cells. High levels in thymus and small intestine.

Its subcellular location is the secreted. Functionally, potentially involved in T-cell development. Recombinant protein shows chemotactic activity on thymocytes, macrophages, THP-1 cells, and dendritics cells but is inactive on peripheral blood lymphocytes and neutrophils. Binds to CCR9. Isoform 2 is an antagonist of isoform 1. Binds to atypical chemokine receptor ACKR4 and mediates the recruitment of beta-arrestin (ARRB1/2) to ACKR4. This chain is C-C motif chemokine 25 (CCL25), found in Homo sapiens (Human).